The following is an 84-amino-acid chain: U2-theraphotoxin-Cg1b 1 (84 aa).

The signal sequence occupies residues 1 to 21 (MKVSVLITLAVWGVMFLLTSA). A propeptide spanning residues 22-48 (QERGSDQMDSPAWLKSMERIFQSEERE) is cleaved from the precursor. Cystine bridges form between Cys49–Cys63, Cys56–Cys68, and Cys62–Cys76.

The protein belongs to the neurotoxin 10 (Hwtx-1) family. 06 (F4b) subfamily. In terms of tissue distribution, expressed by the venom gland.

The protein resides in the secreted. In terms of biological role, probable ion channel inhibitor. The chain is U2-theraphotoxin-Cg1b 1 from Chilobrachys guangxiensis (Chinese earth tiger tarantula).